The chain runs to 334 residues: Phosphoribosylformylglycinamidine cyclo-ligase (334 aa).

It belongs to the AIR synthase family.

It localises to the cytoplasm. The catalysed reaction is 2-formamido-N(1)-(5-O-phospho-beta-D-ribosyl)acetamidine + ATP = 5-amino-1-(5-phospho-beta-D-ribosyl)imidazole + ADP + phosphate + H(+). The protein operates within purine metabolism; IMP biosynthesis via de novo pathway; 5-amino-1-(5-phospho-D-ribosyl)imidazole from N(2)-formyl-N(1)-(5-phospho-D-ribosyl)glycinamide: step 2/2. This is Phosphoribosylformylglycinamidine cyclo-ligase from Pyrococcus abyssi (strain GE5 / Orsay).